Reading from the N-terminus, the 492-residue chain is Glutamate--cysteine ligase A, chloroplastic (492 aa).

A disulfide bridge connects residues cysteine 156 and cysteine 376.

This sequence belongs to the carboxylate-amine ligase family. Glutamate--cysteine ligase type 2 subfamily. As to quaternary structure, homodimer or monomer when oxidized or reduced, respectively. In terms of processing, the Cys-156-Cys-376 disulfide bridge is known to modulate the enzyme activity according to the redox status. The oxidized form constitutes the active enzyme.

It localises to the plastid. The protein localises to the chloroplast. The enzyme catalyses L-cysteine + L-glutamate + ATP = gamma-L-glutamyl-L-cysteine + ADP + phosphate + H(+). It participates in sulfur metabolism; glutathione biosynthesis; glutathione from L-cysteine and L-glutamate: step 1/2. The sequence is that of Glutamate--cysteine ligase A, chloroplastic (GSH1-1) from Oryza sativa subsp. japonica (Rice).